A 501-amino-acid polypeptide reads, in one-letter code: Cytochrome P450 2J6 (501 aa).

C447 lines the heme pocket.

It belongs to the cytochrome P450 family. Requires heme as cofactor.

The protein resides in the endoplasmic reticulum membrane. Its subcellular location is the microsome membrane. The catalysed reaction is an organic molecule + reduced [NADPH--hemoprotein reductase] + O2 = an alcohol + oxidized [NADPH--hemoprotein reductase] + H2O + H(+). The polypeptide is Cytochrome P450 2J6 (Cyp2j6) (Mus musculus (Mouse)).